Reading from the N-terminus, the 441-residue chain is Endoglucanase E-2 (441 aa).

The tat-type signal signal peptide spans 1–31 (MSPRPLRALLGAAAAALVSAAALAFPSQAAA). Residues 32 to 320 (NDSPFYVNPN…YEMAIAAGGT (289 aa)) form a catalytic region. Residue Asp-110 is part of the active site. Intrachain disulfides connect Cys-111-Cys-156 and Cys-263-Cys-298. Asp-148 acts as the Proton donor in catalysis. The Nucleophile role is filled by Asp-296. The segment at 317 to 343 (AGGTNPNPNPNPTPTPTPTPTPPPGSS) is disordered. The interval 321–340 (NPNPNPNPTPTPTPTPTPPP) is linker. The segment covering 323 to 341 (NPNPNPTPTPTPTPTPPPG) has biased composition (pro residues). Positions 339-441 (PPGSSGACTA…SVPTLTCAAS (103 aa)) constitute a CBM2 domain. An intrachain disulfide couples Cys-346 to Cys-438.

Belongs to the glycosyl hydrolase 6 (cellulase B) family. In terms of assembly, homodimer. Predicted to be exported by the Tat system. The position of the signal peptide cleavage has been experimentally proven.

It catalyses the reaction Endohydrolysis of (1-&gt;4)-beta-D-glucosidic linkages in cellulose, lichenin and cereal beta-D-glucans.. It functions in the pathway glycan metabolism; cellulose degradation. In Thermobifida fusca (Thermomonospora fusca), this protein is Endoglucanase E-2 (celB).